Here is a 609-residue protein sequence, read N- to C-terminus: Glutamine--fructose-6-phosphate aminotransferase [isomerizing] (609 aa).

Cys-2 acts as the Nucleophile; for GATase activity in catalysis. The Glutamine amidotransferase type-2 domain maps to Cys-2–Arg-218. SIS domains lie at Ala-286–Leu-426 and Leu-458–Pro-599. Lys-604 acts as the For Fru-6P isomerization activity in catalysis.

Homodimer.

It localises to the cytoplasm. It catalyses the reaction D-fructose 6-phosphate + L-glutamine = D-glucosamine 6-phosphate + L-glutamate. Its function is as follows. Catalyzes the first step in hexosamine metabolism, converting fructose-6P into glucosamine-6P using glutamine as a nitrogen source. The polypeptide is Glutamine--fructose-6-phosphate aminotransferase [isomerizing] (Salmonella paratyphi A (strain ATCC 9150 / SARB42)).